The following is a 149-amino-acid chain: Arginine regulator (149 aa).

It belongs to the ArgR family.

The protein localises to the cytoplasm. The protein operates within amino-acid degradation; L-arginine degradation via ADI pathway. Regulates the transcription of the arc operon, involved in arginine catabolism. The chain is Arginine regulator (argR1) from Bacillus thuringiensis subsp. konkukian (strain 97-27).